A 1165-amino-acid polypeptide reads, in one-letter code: Chromosome partition protein Smc (1165 aa).

Residue 32 to 39 (PNGSGKSN) coordinates ATP. Residues 161–503 (AGVAEFDRKI…ETQRQVWREA (343 aa)) are a coiled coil. Positions 518–630 (QGVHGLISQL…VFRSLELARR (113 aa)) constitute an SMC hinge domain. Coiled-coil stretches lie at residues 672–901 (ELAE…LQQR) and 946–1010 (DLSL…DCDT).

This sequence belongs to the SMC family. As to quaternary structure, homodimer.

Its subcellular location is the cytoplasm. Functionally, required for chromosome condensation and partitioning. This is Chromosome partition protein Smc from Gloeobacter violaceus (strain ATCC 29082 / PCC 7421).